The following is a 137-amino-acid chain: Large-conductance mechanosensitive channel (137 aa).

Topologically, residues 1-16 are cytoplasmic; it reads MSIIKEFREFAMRGNV. A helical membrane pass occupies residues 17-45; it reads VDLAVGVIIGALFGKIVSSLVSDIIMPPL. The Periplasmic segment spans residues 46–74; it reads GLLIGGVDFKQFALFLRNAQGGIPAVVMN. The helical transmembrane segment at 75 to 94 threads the bilayer; it reads YGAFIQNIFDFIIVAFAIFI. Residues 95–137 lie on the Cytoplasmic side of the membrane; sequence AIKLMNKMRCKQEDTPAAPPKPSAEEKLLAEIRDLLKEQQTRQ.

Belongs to the MscL family. As to quaternary structure, homopentamer.

It is found in the cell inner membrane. Its function is as follows. Channel that opens in response to stretch forces in the membrane lipid bilayer. Forms a nonselective ion channel with a conductance of about 4 nanosiemens. May participate in the regulation of osmotic pressure changes within the cell. The protein is Large-conductance mechanosensitive channel of Pectobacterium carotovorum (Erwinia carotovora).